The chain runs to 187 residues: uncharacterized protein (187 aa).

This is an uncharacterized protein from Acanthamoeba polyphaga mimivirus (APMV).